A 719-amino-acid chain; its full sequence is MKSKNQNMYRSFSSNATVDKSFTDPLEHNTNMELQNSNHEDCLKMSEYESVEPFVSVSTIQTGIGIAGKILGNLGVPFAGQVASLYSFILGELWPKGKSQWEIFMEHVEELINQKISTYARNKALADLKGLGDALAVYHESLESWIENRNNTRVRSVVKNQYIALELMFVQKLPSFAVSGEEVPLLPIYAQAANLHLLLLRDASIFGKEWGLSESEISTFYNRQSSQTQEYSDYCSEWYNTGLNRLRGTNAESWVRYNQFRRDMTLMVLDLVALFPSYDTRMYPIPTSAQLTREVYTDAIGTVHPNASFASTTWYNNNAPSFSTIEAAVVRNPHLLDFLEQVTIYSLLSRWSNTQYMNMWGGHKLEFRTIGGTLNTSTQGSTNTSINPVTLPFTSRDVYRTESLAGLNLFLTQPVNGVPRVDFHWKFVTHPIASDNFYYPGYAGIGTQLQDSENELPPETTGQPNYESYSHRLSHIGLISASHVKALVYSWTHRSADRTNTINSDSITQIPLVKAFNLPSGASVVRGPGFTGGDILQRTNTGTFGDIRVNINPPFAQRYRLRIRYASTTNLEFHTSINGKAINQGNFSATMNRGEDLDYKAFRTVGFTTPFSFSNAQSTFTIGAWNFSLGNEVYIDRIEFVPVEVTYEAEYDLKKAQDEITAMFTSTNLRRLKTNVTDCHIDQVSNLVESLSDEFYLDEKRELFEIVKYAKQLNIERNM.

Belongs to the delta endotoxin family.

Its function is as follows. Promotes colloidosmotic lysis by binding to the midgut epithelial cells of many lepidopteran larvae. Active on Plutella xylostella and on Bombyx mori. The sequence is that of Pesticidal crystal protein Cry1Id (cry1Id) from Bacillus thuringiensis.